We begin with the raw amino-acid sequence, 602 residues long: Threonine--tRNA ligase (602 aa).

A catalytic region spans residues 208-499; the sequence is DHRKLGTELK…LTEHCAGEFP (292 aa). Zn(2+) is bound by residues cysteine 300, histidine 351, and histidine 476.

This sequence belongs to the class-II aminoacyl-tRNA synthetase family. As to quaternary structure, homodimer. Zn(2+) is required as a cofactor.

It localises to the cytoplasm. The catalysed reaction is tRNA(Thr) + L-threonine + ATP = L-threonyl-tRNA(Thr) + AMP + diphosphate + H(+). Functionally, catalyzes the attachment of threonine to tRNA(Thr) in a two-step reaction: L-threonine is first activated by ATP to form Thr-AMP and then transferred to the acceptor end of tRNA(Thr). Also edits incorrectly charged L-seryl-tRNA(Thr). In Campylobacter jejuni (strain RM1221), this protein is Threonine--tRNA ligase.